Consider the following 331-residue polypeptide: Beta-ketoacyl-[acyl-carrier-protein] synthase III (331 aa).

Active-site residues include C113 and H253. An ACP-binding region spans residues 254 to 258; it reads QANTR. N283 is an active-site residue.

It belongs to the thiolase-like superfamily. FabH family. In terms of assembly, homodimer.

The protein resides in the cytoplasm. It carries out the reaction malonyl-[ACP] + acetyl-CoA + H(+) = 3-oxobutanoyl-[ACP] + CO2 + CoA. The protein operates within lipid metabolism; fatty acid biosynthesis. Catalyzes the condensation reaction of fatty acid synthesis by the addition to an acyl acceptor of two carbons from malonyl-ACP. Catalyzes the first condensation reaction which initiates fatty acid synthesis and may therefore play a role in governing the total rate of fatty acid production. Possesses both acetoacetyl-ACP synthase and acetyl transacylase activities. Its substrate specificity determines the biosynthesis of branched-chain and/or straight-chain of fatty acids. The protein is Beta-ketoacyl-[acyl-carrier-protein] synthase III of Desulfitobacterium hafniense (strain DSM 10664 / DCB-2).